The following is a 348-amino-acid chain: D-alanine--D-alanine ligase (348 aa).

An ATP-grasp domain is found at 136–344 (KSVFKSYNLP…LEKLVANLIE (209 aa)). 171–226 (NKIISYPCFIKPANLGSSVGITKAYSKEEFIAGIEFAAKYDERIIVEKSIEGRELE) contacts ATP. Residues D297, E311, and N313 each coordinate Mg(2+).

It belongs to the D-alanine--D-alanine ligase family. It depends on Mg(2+) as a cofactor. Mn(2+) serves as cofactor.

The protein resides in the cytoplasm. It catalyses the reaction 2 D-alanine + ATP = D-alanyl-D-alanine + ADP + phosphate + H(+). Its pathway is cell wall biogenesis; peptidoglycan biosynthesis. Cell wall formation. This Prochlorococcus marinus (strain NATL2A) protein is D-alanine--D-alanine ligase.